The primary structure comprises 321 residues: MAKRAEPLPDPACAASDIGQQIVRWLTHLRAERRLSPKTLEAYARDVRQCLMFLGQHWSEQVTLEGFVALEPADIRSFMAARRADDIGGRSLMRSLAGLRSFARFLEREGLGKVGALGAIRAPKVGKSVPKPIHMSAAKRFADASERAGEDREPWIWARDAAVMALLYGSGLRISEALGLKRRDVPPPGAGDVLVVTGKGNKTRMVPVLQNVLALIHEYVAMCPHSLPPEGPIFVGARGGPLRARIIQLVMARMRGALGLPDSATPHALRHSFATHLLSRGGDLRAIQELLGHASLSTTQIYTGIDSERLLDVYRTAHPRA.

In terms of domain architecture, Core-binding (CB) spans 16 to 107 (SDIGQQIVRW…GLRSFARFLE (92 aa)). A Tyr recombinase domain is found at 128 to 315 (SVPKPIHMSA…DSERLLDVYR (188 aa)). Active-site residues include arginine 173, lysine 199, histidine 267, arginine 270, and histidine 293. Tyrosine 302 functions as the O-(3'-phospho-DNA)-tyrosine intermediate in the catalytic mechanism.

This sequence belongs to the 'phage' integrase family. XerC subfamily. As to quaternary structure, forms a cyclic heterotetrameric complex composed of two molecules of XerC and two molecules of XerD.

The protein localises to the cytoplasm. Functionally, site-specific tyrosine recombinase, which acts by catalyzing the cutting and rejoining of the recombining DNA molecules. The XerC-XerD complex is essential to convert dimers of the bacterial chromosome into monomers to permit their segregation at cell division. It also contributes to the segregational stability of plasmids. The chain is Tyrosine recombinase XerC from Nitrobacter winogradskyi (strain ATCC 25391 / DSM 10237 / CIP 104748 / NCIMB 11846 / Nb-255).